A 324-amino-acid polypeptide reads, in one-letter code: Beta-ketoacyl-[acyl-carrier-protein] synthase III (324 aa).

Active-site residues include C112 and H249. Residues 250 to 254 are ACP-binding; the sequence is QANIR. N279 is an active-site residue.

This sequence belongs to the thiolase-like superfamily. FabH family. As to quaternary structure, homodimer.

It is found in the cytoplasm. The enzyme catalyses malonyl-[ACP] + acetyl-CoA + H(+) = 3-oxobutanoyl-[ACP] + CO2 + CoA. It participates in lipid metabolism; fatty acid biosynthesis. In terms of biological role, catalyzes the condensation reaction of fatty acid synthesis by the addition to an acyl acceptor of two carbons from malonyl-ACP. Catalyzes the first condensation reaction which initiates fatty acid synthesis and may therefore play a role in governing the total rate of fatty acid production. Possesses both acetoacetyl-ACP synthase and acetyl transacylase activities. Its substrate specificity determines the biosynthesis of branched-chain and/or straight-chain of fatty acids. The sequence is that of Beta-ketoacyl-[acyl-carrier-protein] synthase III from Streptococcus sanguinis (strain SK36).